Reading from the N-terminus, the 277-residue chain is 4-hydroxy-3-methylbut-2-enyl diphosphate reductase (277 aa).

A [4Fe-4S] cluster-binding site is contributed by C12. Residues H36 and H70 each coordinate (2E)-4-hydroxy-3-methylbut-2-enyl diphosphate. Positions 36 and 70 each coordinate dimethylallyl diphosphate. Residues H36 and H70 each coordinate isopentenyl diphosphate. C92 lines the [4Fe-4S] cluster pocket. (2E)-4-hydroxy-3-methylbut-2-enyl diphosphate is bound at residue H120. Residue H120 participates in dimethylallyl diphosphate binding. H120 provides a ligand contact to isopentenyl diphosphate. E122 functions as the Proton donor in the catalytic mechanism. T158 lines the (2E)-4-hydroxy-3-methylbut-2-enyl diphosphate pocket. C186 serves as a coordination point for [4Fe-4S] cluster. Positions 214, 216, and 258 each coordinate (2E)-4-hydroxy-3-methylbut-2-enyl diphosphate. Residues S214, N216, and S258 each coordinate dimethylallyl diphosphate. Isopentenyl diphosphate is bound by residues S214, N216, and S258.

This sequence belongs to the IspH family. Requires [4Fe-4S] cluster as cofactor.

It carries out the reaction isopentenyl diphosphate + 2 oxidized [2Fe-2S]-[ferredoxin] + H2O = (2E)-4-hydroxy-3-methylbut-2-enyl diphosphate + 2 reduced [2Fe-2S]-[ferredoxin] + 2 H(+). The enzyme catalyses dimethylallyl diphosphate + 2 oxidized [2Fe-2S]-[ferredoxin] + H2O = (2E)-4-hydroxy-3-methylbut-2-enyl diphosphate + 2 reduced [2Fe-2S]-[ferredoxin] + 2 H(+). It participates in isoprenoid biosynthesis; dimethylallyl diphosphate biosynthesis; dimethylallyl diphosphate from (2E)-4-hydroxy-3-methylbutenyl diphosphate: step 1/1. It functions in the pathway isoprenoid biosynthesis; isopentenyl diphosphate biosynthesis via DXP pathway; isopentenyl diphosphate from 1-deoxy-D-xylulose 5-phosphate: step 6/6. Catalyzes the conversion of 1-hydroxy-2-methyl-2-(E)-butenyl 4-diphosphate (HMBPP) into a mixture of isopentenyl diphosphate (IPP) and dimethylallyl diphosphate (DMAPP). Acts in the terminal step of the DOXP/MEP pathway for isoprenoid precursor biosynthesis. The polypeptide is 4-hydroxy-3-methylbut-2-enyl diphosphate reductase (Campylobacter jejuni subsp. jejuni serotype O:23/36 (strain 81-176)).